We begin with the raw amino-acid sequence, 878 residues long: Alanine--tRNA ligase (878 aa).

Positions 567, 571, 669, and 673 each coordinate Zn(2+).

It belongs to the class-II aminoacyl-tRNA synthetase family. It depends on Zn(2+) as a cofactor.

It is found in the cytoplasm. The catalysed reaction is tRNA(Ala) + L-alanine + ATP = L-alanyl-tRNA(Ala) + AMP + diphosphate. Its function is as follows. Catalyzes the attachment of alanine to tRNA(Ala) in a two-step reaction: alanine is first activated by ATP to form Ala-AMP and then transferred to the acceptor end of tRNA(Ala). Also edits incorrectly charged Ser-tRNA(Ala) and Gly-tRNA(Ala) via its editing domain. This Rickettsia felis (strain ATCC VR-1525 / URRWXCal2) (Rickettsia azadi) protein is Alanine--tRNA ligase.